The chain runs to 177 residues: PLAC8-like protein 1 (177 aa).

The protein belongs to the cornifelin family.

The protein is PLAC8-like protein 1 (Plac8l1) of Mus musculus (Mouse).